Consider the following 340-residue polypeptide: Protein arginine N-methyltransferase 1 (340 aa).

Residues 16 to 311 form the SAM-dependent MTase PRMT-type domain; that stretch reads KDYYFDSYSH…TCKPAEGNHR (296 aa). Residue tyrosine 19 is modified to Phosphotyrosine. S-adenosyl-L-methionine contacts are provided by histidine 29, arginine 38, glycine 62, aspartate 84, and glutamate 113. Catalysis depends on residues glutamate 128 and glutamate 137. Position 176 is a phosphoserine (serine 176).

It belongs to the class I-like SAM-binding methyltransferase superfamily. Protein arginine N-methyltransferase family. In terms of assembly, interacts with pab2.

Its subcellular location is the nucleus. It carries out the reaction L-arginyl-[protein] + S-adenosyl-L-methionine = N(omega)-methyl-L-arginyl-[protein] + S-adenosyl-L-homocysteine + H(+). The catalysed reaction is L-arginyl-[protein] + 2 S-adenosyl-L-methionine = N(omega),N(omega)-dimethyl-L-arginyl-[protein] + 2 S-adenosyl-L-homocysteine + 2 H(+). Its function is as follows. S-adenosyl-L-methionine-dependent protein-arginine N-methyltransferase that catalyzes both the mono- and asymmetric (type I) dimethylation of the guanidino nitrogens of arginine residues in target proteins. Asymmetrically dimethylates the polyadenylate-binding protein pab2, modulating pab2 oligomerization. In Schizosaccharomyces pombe (strain 972 / ATCC 24843) (Fission yeast), this protein is Protein arginine N-methyltransferase 1.